Reading from the N-terminus, the 145-residue chain is MTDIIRQLEAEQAAKIEEKRKLPDFQPGDTVRVQVRVTEGTRTRVQAYEGVCIARSGAGLNENFTVRKISYGEGVERVFPVYSPIVEGVEVVRRGKVRRAKLYYLRGLTGKAARIAEKKDNRTKAERAADKLAAAKAEAAKTAAE.

It belongs to the bacterial ribosomal protein bL19 family.

Functionally, this protein is located at the 30S-50S ribosomal subunit interface and may play a role in the structure and function of the aminoacyl-tRNA binding site. The chain is Large ribosomal subunit protein bL19 from Brucella abortus (strain S19).